A 454-amino-acid polypeptide reads, in one-letter code: tRNA modification GTPase MnmE (454 aa).

R23, E86, and R125 together coordinate (6S)-5-formyl-5,6,7,8-tetrahydrofolate. Positions 221–376 constitute a TrmE-type G domain; it reads GLTLAIVGRP…LREQILRMVS (156 aa). N231 provides a ligand contact to K(+). GTP contacts are provided by residues 231–236, 250–256, and 275–278; these read NVGKSS, TAIPGTT, and DTAG. S235 is a binding site for Mg(2+). K(+)-binding residues include T250, I252, and T255. T256 provides a ligand contact to Mg(2+). K454 contacts (6S)-5-formyl-5,6,7,8-tetrahydrofolate.

Belongs to the TRAFAC class TrmE-Era-EngA-EngB-Septin-like GTPase superfamily. TrmE GTPase family. Homodimer. Heterotetramer of two MnmE and two MnmG subunits. The cofactor is K(+).

The protein localises to the cytoplasm. Functionally, exhibits a very high intrinsic GTPase hydrolysis rate. Involved in the addition of a carboxymethylaminomethyl (cmnm) group at the wobble position (U34) of certain tRNAs, forming tRNA-cmnm(5)s(2)U34. This is tRNA modification GTPase MnmE from Koribacter versatilis (strain Ellin345).